Here is a 161-residue protein sequence, read N- to C-terminus: Nucleotide-binding protein Plav_2177 (161 aa).

It belongs to the YajQ family.

Nucleotide-binding protein. This Parvibaculum lavamentivorans (strain DS-1 / DSM 13023 / NCIMB 13966) protein is Nucleotide-binding protein Plav_2177.